Reading from the N-terminus, the 155-residue chain is Protein E6 (155 aa).

Zinc fingers lie at residues 31–67 (CIFC…CLAC) and 104–140 (CCKC…CLHC).

Belongs to the papillomaviridae E6 protein family. In terms of assembly, forms homodimers. Interacts with ubiquitin-protein ligase UBE3A/E6-AP; this interaction stimulates UBE3A ubiquitin activity. Interacts with host TP53 and EP300; this interaction inhibits TP53 activity.

It is found in the host cytoplasm. Its subcellular location is the host nucleus. This protein may be involved in the oncogenic potential of this virus (cervical neoplasia-associated virus). Functionally, plays a major role in the induction and maintenance of cellular transformation. E6 associates with host UBE3A/E6-AP ubiquitin-protein ligase and modulates its activity. Sequesters tumor suppressor TP53 in the host cytoplasm and modulates its activity by interacting with host EP300 that results in the reduction of TP53 acetylation and activation. In turn, apoptosis induced by DNA damage is inhibited. E6 also protects host keratinocytes from apoptosis by mediating the degradation of host BAK1. May also inhibit host immune response. In Human papillomavirus 43, this protein is Protein E6.